Reading from the N-terminus, the 365-residue chain is MQLEIQVALNFIISYLYNKLPRRRVNIFGEELERLLKQKYEGHWYPEKPYKGSGFRCIHVGEKVDPVIEQASKESGLDIDDVRGNLPQDLSVWIDPFEVSYQIGEKGPVKVLYVDDSNENGCELDKEIKNSFNPEAQVFMPISDPASSVSSSPSPPFGHSAAVSPTFMPRSTQPLTFTTATFAATKFGSTKMKNSGRSSKVARTSPISLGLNVNVNDLLKQKAISSSMHSLYGLGLGSQQQPQPQPQQPPSQPPPPPPPPQQQQQHQQQQQQQQQQQQQPQQQTSALSPNAKEFIFPNMQGQGSSTNGMFPGDSPLNLSPLQYSNAFNVFAAYGGLNEKSFVDGLNFSLNNIQYSNQQFQPVMAN.

Residues 22–39 (RRRVNIFGEELERLLKQK) carry the Bipartite nuclear localization signal motif. The segment at 82–92 (VRGNLPQDLSV) is important for nuclear localization. A compositionally biased stretch (low complexity) spans 144–160 (DPASSVSSSPSPPFGHS). The tract at residues 144 to 171 (DPASSVSSSPSPPFGHSAAVSPTFMPRS) is disordered. A required for interaction with CPEB3 region spans residues 161 to 220 (AAVSPTFMPRSTQPLTFTTATFAATKFGSTKMKNSGRSSKVARTSPISLGLNVNVNDLLK). T204 bears the Phosphothreonine mark. A Nuclear export signal motif is present at residues 228–236 (MHSLYGLGL). Residues 233–287 (GLGLGSQQQPQPQPQQPPSQPPPPPPPPQQQQQHQQQQQQQQQQQQQPQQQTSAL) are disordered. A compositionally biased stretch (pro residues) spans 243 to 261 (QPQPQQPPSQPPPPPPPPQ). The span at 262–283 (QQQQHQQQQQQQQQQQQQPQQQ) shows a compositional bias: low complexity.

The protein belongs to the BTG family. As to quaternary structure, interacts with ERBB2. Interacts with CNOT7. Interacts with CPEB3 (via C-terminal RNA-binding region); recruits CNOT7 to CPEB3 to form a ternary complex required for mRNA deadenylation and decay. Interacts with CNOT8. Interacts with CPEB4. Post-translationally, phosphorylated on Ser and Thr residues.

The protein localises to the cytoplasm. It localises to the nucleus. Its function is as follows. Anti-proliferative protein; the function is mediated by association with deadenylase subunits of the CCR4-NOT complex. Mediates CPEB3-accelerated mRNA deadenylation by binding to CPEB3 and recruiting CNOT7 which leads to target mRNA deadenylation and decay. This is Protein Tob1 (Tob1) from Rattus norvegicus (Rat).